Consider the following 321-residue polypeptide: tRNA uridine(34) hydroxylase (321 aa).

One can recognise a Rhodanese domain in the interval 135-233 (DDPLTLVIDT…YLEEVPENES (99 aa)). Cysteine 193 serves as the catalytic Cysteine persulfide intermediate.

This sequence belongs to the TrhO family.

It catalyses the reaction uridine(34) in tRNA + AH2 + O2 = 5-hydroxyuridine(34) in tRNA + A + H2O. Functionally, catalyzes oxygen-dependent 5-hydroxyuridine (ho5U) modification at position 34 in tRNAs. In Prochlorococcus marinus (strain SARG / CCMP1375 / SS120), this protein is tRNA uridine(34) hydroxylase.